We begin with the raw amino-acid sequence, 478 residues long: Protein nucleotidyltransferase YdiU (478 aa).

Glycine 84, glycine 86, arginine 87, lysine 107, aspartate 119, glycine 120, arginine 170, and arginine 177 together coordinate ATP. Aspartate 246 acts as the Proton acceptor in catalysis. Mg(2+) contacts are provided by asparagine 247 and aspartate 256. ATP is bound at residue aspartate 256.

Belongs to the SELO family. Mg(2+) serves as cofactor. It depends on Mn(2+) as a cofactor.

It catalyses the reaction L-seryl-[protein] + ATP = 3-O-(5'-adenylyl)-L-seryl-[protein] + diphosphate. The enzyme catalyses L-threonyl-[protein] + ATP = 3-O-(5'-adenylyl)-L-threonyl-[protein] + diphosphate. It carries out the reaction L-tyrosyl-[protein] + ATP = O-(5'-adenylyl)-L-tyrosyl-[protein] + diphosphate. The catalysed reaction is L-histidyl-[protein] + UTP = N(tele)-(5'-uridylyl)-L-histidyl-[protein] + diphosphate. It catalyses the reaction L-seryl-[protein] + UTP = O-(5'-uridylyl)-L-seryl-[protein] + diphosphate. The enzyme catalyses L-tyrosyl-[protein] + UTP = O-(5'-uridylyl)-L-tyrosyl-[protein] + diphosphate. In terms of biological role, nucleotidyltransferase involved in the post-translational modification of proteins. It can catalyze the addition of adenosine monophosphate (AMP) or uridine monophosphate (UMP) to a protein, resulting in modifications known as AMPylation and UMPylation. This chain is Protein nucleotidyltransferase YdiU, found in Shigella sonnei (strain Ss046).